The sequence spans 504 residues: Maturase K (504 aa).

It belongs to the intron maturase 2 family. MatK subfamily.

The protein resides in the plastid. It is found in the chloroplast. Usually encoded in the trnK tRNA gene intron. Probably assists in splicing its own and other chloroplast group II introns. The polypeptide is Maturase K (Pseudoturritis turrita (Tower rock-cress)).